A 242-amino-acid chain; its full sequence is NADPH-dependent pterin aldehyde reductase (242 aa).

Thr2 is modified (N-acetylthreonine). 21 to 50 (LITGVSKGLGRALALELAKRGHTVIGCARS) is an NADP(+) binding site. Ser153 serves as a coordination point for substrate. The active-site Proton acceptor is the Tyr166. Lys170 is a binding site for NADP(+).

The protein belongs to the short-chain dehydrogenases/reductases (SDR) family. As to quaternary structure, homodimer. Mostly expressed in seeds, and, to a lower extent, in roots, leaves, flowers and siliques.

Its subcellular location is the cytoplasm. Functionally, NADPH-dependent pterin aldehyde reductase involved in pterin aldehyde salvage during folate turnover. Catalyzes the reduction of diverse aromatic and aliphatic aldehydes (e.g. acetaldehyde, n-propanal, 1-naphthaldehyde, benzaldehyde, cinnamaldehyde, n-butanal, n-hexanal, n-pentanal, 2-naphthaldehyde, n-octanal, n-nonanal and n-heptanal), in addition to the conversion of pterin-6-aldehyde (PtCHO) to 6-hydroxymethylpterin (PtCH(2)OH), and the conversion of dihydropterin-6-aldehyde (H(2)PtCHO) to 6-hydroxymethyldihydropterin (H(2)PtCH(2)OH). Cannot reduce the pterin ring. The chain is NADPH-dependent pterin aldehyde reductase from Arabidopsis thaliana (Mouse-ear cress).